Consider the following 56-residue polypeptide: Large ribosomal subunit protein eL40 (56 aa).

Belongs to the eukaryotic ribosomal protein eL40 family.

The polypeptide is Large ribosomal subunit protein eL40 (Saccharolobus islandicus (strain Y.N.15.51 / Yellowstone #2) (Sulfolobus islandicus)).